We begin with the raw amino-acid sequence, 200 residues long: Ubiquitin-conjugating enzyme E2 K (200 aa).

An N-acetylalanine modification is found at Ala2. The 151-residue stretch at 4-154 (IAVQRIKREF…ARLWAHVYAG (151 aa)) folds into the UBC core domain. Residue Lys14 is modified to N6-acetyllysine; alternate. Residue Lys14 forms a Glycyl lysine isopeptide (Lys-Gly) (interchain with G-Cter in SUMO); alternate linkage. Residue Lys14 forms a Glycyl lysine isopeptide (Lys-Gly) (interchain with G-Cter in SUMO1); alternate linkage. The active-site Glycyl thioester intermediate is the Cys92. Ser159 bears the Phosphoserine mark. One can recognise a UBA domain in the interval 160 to 200 (PEYTKKIENLCAMGFDRNAVIVALSSKSWDVETATELLLSN).

Belongs to the ubiquitin-conjugating enzyme family. In terms of assembly, interacts with RNF138/NARF. Interacts with BRCA1. Post-translationally, sumoylation at Lys-14 impairs catalytic activity.

Its subcellular location is the cytoplasm. It catalyses the reaction S-ubiquitinyl-[E1 ubiquitin-activating enzyme]-L-cysteine + [E2 ubiquitin-conjugating enzyme]-L-cysteine = [E1 ubiquitin-activating enzyme]-L-cysteine + S-ubiquitinyl-[E2 ubiquitin-conjugating enzyme]-L-cysteine.. Its pathway is protein modification; protein ubiquitination. Its function is as follows. Accepts ubiquitin from the E1 complex and catalyzes its covalent attachment to other proteins. In vitro, in the presence or in the absence of BRCA1-BARD1 E3 ubiquitin-protein ligase complex, catalyzes the synthesis of 'Lys-48'-linked polyubiquitin chains. Does not transfer ubiquitin directly to but elongates monoubiquitinated substrate protein. Mediates the selective degradation of short-lived and abnormal proteins, such as the endoplasmic reticulum-associated degradation (ERAD) of misfolded lumenal proteins. Ubiquitinates huntingtin. May mediate foam cell formation by the suppression of apoptosis of lipid-bearing macrophages through ubiquitination and subsequence degradation of p53/TP53. Proposed to be involved in ubiquitination and proteolytic processing of NF-kappa-B; in vitro supports ubiquitination of NFKB1. The protein is Ubiquitin-conjugating enzyme E2 K (UBE2K) of Bos taurus (Bovine).